The following is a 187-amino-acid chain: Orotate phosphoribosyltransferase (187 aa).

110–118 (EDVVTTGGS) is a 5-phospho-alpha-D-ribose 1-diphosphate binding site. 2 residues coordinate orotate: T114 and R142.

It belongs to the purine/pyrimidine phosphoribosyltransferase family. PyrE subfamily. As to quaternary structure, homodimer. Requires Mg(2+) as cofactor.

The catalysed reaction is orotidine 5'-phosphate + diphosphate = orotate + 5-phospho-alpha-D-ribose 1-diphosphate. It functions in the pathway pyrimidine metabolism; UMP biosynthesis via de novo pathway; UMP from orotate: step 1/2. In terms of biological role, catalyzes the transfer of a ribosyl phosphate group from 5-phosphoribose 1-diphosphate to orotate, leading to the formation of orotidine monophosphate (OMP). The sequence is that of Orotate phosphoribosyltransferase from Thermotoga maritima (strain ATCC 43589 / DSM 3109 / JCM 10099 / NBRC 100826 / MSB8).